The sequence spans 157 residues: Small ribosomal subunit protein uS7 (157 aa).

It belongs to the universal ribosomal protein uS7 family. Part of the 30S ribosomal subunit. Contacts proteins S9 and S11.

Functionally, one of the primary rRNA binding proteins, it binds directly to 16S rRNA where it nucleates assembly of the head domain of the 30S subunit. Is located at the subunit interface close to the decoding center, probably blocks exit of the E-site tRNA. The protein is Small ribosomal subunit protein uS7 of Variovorax paradoxus (strain S110).